The following is a 535-amino-acid chain: uncharacterized protein (535 aa).

6 disordered regions span residues 1–58 (MSMK…PRGP), 211–254 (EPPK…PPCI), 313–353 (RRVA…EQVK), 376–416 (RPDK…DQRL), 421–440 (QGLD…DAAW), and 508–535 (SLFE…SRRD). The span at 22–34 (IRRDPWFGGRDNE) shows a compositional bias: basic and acidic residues. The SNW stretch occupies residues 179 to 342 (AQYIRYTPSQ…KARQERSAMR (164 aa)). Residues 376–393 (RPDKADKLRKERERDISE) show a composition bias toward basic and acidic residues. Over residues 511–535 (EHTKEKKRGGDGGDSRGESKRSRRD) the composition is skewed to basic and acidic residues.

This sequence belongs to the SNW family.

This is an uncharacterized protein from Caenorhabditis elegans.